A 212-amino-acid polypeptide reads, in one-letter code: Methylthioribulose-1-phosphate dehydratase (212 aa).

Residues His99 and His101 each contribute to the Zn(2+) site.

It belongs to the aldolase class II family. MtnB subfamily. In terms of assembly, homotetramer. Zn(2+) is required as a cofactor.

The enzyme catalyses 5-(methylsulfanyl)-D-ribulose 1-phosphate = 5-methylsulfanyl-2,3-dioxopentyl phosphate + H2O. It functions in the pathway amino-acid biosynthesis; L-methionine biosynthesis via salvage pathway; L-methionine from S-methyl-5-thio-alpha-D-ribose 1-phosphate: step 2/6. In terms of biological role, catalyzes the dehydration of methylthioribulose-1-phosphate (MTRu-1-P) into 2,3-diketo-5-methylthiopentyl-1-phosphate (DK-MTP-1-P). The sequence is that of Methylthioribulose-1-phosphate dehydratase from Bacillus pumilus (strain SAFR-032).